Reading from the N-terminus, the 232-residue chain is RNA chaperone ProQ (232 aa).

The segment at 105-182 (EAKARVQAQR…REEQHTPVSD (78 aa)) is disordered. The segment covering 117–136 (QQAKKREAAAAAGEKEDAPR) has biased composition (basic and acidic residues). Basic residues predominate over residues 137–146 (RERKPRPTTP). Basic and acidic residues predominate over residues 147–177 (RRKEGAERKPRSQKPVEKAPKTVKAPREEQH).

This sequence belongs to the ProQ family.

It localises to the cytoplasm. RNA chaperone with significant RNA binding, RNA strand exchange and RNA duplexing activities. May regulate ProP activity through an RNA-based, post-transcriptional mechanism. The polypeptide is RNA chaperone ProQ (Escherichia coli (strain UTI89 / UPEC)).